The primary structure comprises 241 residues: Pyrroloquinoline-quinone synthase (241 aa).

Belongs to the PqqC family.

It carries out the reaction 6-(2-amino-2-carboxyethyl)-7,8-dioxo-1,2,3,4,7,8-hexahydroquinoline-2,4-dicarboxylate + 3 O2 = pyrroloquinoline quinone + 2 H2O2 + 2 H2O + H(+). Its pathway is cofactor biosynthesis; pyrroloquinoline quinone biosynthesis. Functionally, ring cyclization and eight-electron oxidation of 3a-(2-amino-2-carboxyethyl)-4,5-dioxo-4,5,6,7,8,9-hexahydroquinoline-7,9-dicarboxylic-acid to PQQ. The sequence is that of Pyrroloquinoline-quinone synthase from Ruegeria pomeroyi (strain ATCC 700808 / DSM 15171 / DSS-3) (Silicibacter pomeroyi).